Reading from the N-terminus, the 504-residue chain is Glycerol kinase (504 aa).

Thr-12 provides a ligand contact to ADP. Thr-12, Thr-13, and Ser-14 together coordinate ATP. Thr-12 lines the sn-glycerol 3-phosphate pocket. Residue Arg-16 participates in ADP binding. Sn-glycerol 3-phosphate is bound by residues Arg-82, Glu-83, Tyr-134, and Asp-246. Glycerol contacts are provided by Arg-82, Glu-83, Tyr-134, Asp-246, and Gln-247. ADP is bound by residues Thr-268 and Gly-312. The ATP site is built by Thr-268, Gly-312, Gln-316, and Gly-413. Gly-413 and Asn-417 together coordinate ADP.

It belongs to the FGGY kinase family.

It carries out the reaction glycerol + ATP = sn-glycerol 3-phosphate + ADP + H(+). It participates in polyol metabolism; glycerol degradation via glycerol kinase pathway; sn-glycerol 3-phosphate from glycerol: step 1/1. With respect to regulation, inhibited by fructose 1,6-bisphosphate (FBP). Key enzyme in the regulation of glycerol uptake and metabolism. Catalyzes the phosphorylation of glycerol to yield sn-glycerol 3-phosphate. The polypeptide is Glycerol kinase (Renibacterium salmoninarum (strain ATCC 33209 / DSM 20767 / JCM 11484 / NBRC 15589 / NCIMB 2235)).